The chain runs to 1016 residues: UvrABC system protein A (1016 aa).

An ATP-binding site is contributed by 32 to 39 (GVSGSGKS). The segment at 259–286 (CPEHGSVLEELEPRSFSFNSPYGACGDC) adopts a C4-type zinc-finger fold. 2 ABC transporter domains span residues 315–627 (WTKK…KNSL) and 647–975 (GNGK…EYLR). 679–686 (GPSGSGKS) serves as a coordination point for ATP. The C4-type zinc finger occupies 778–804 (CEHCKGDGVMKIEMNFLPDIYVPCEVC). Residues 984 to 1016 (EPRARGEKAEKPAKAKAPAKKRTKKQTELVEAD) are disordered. Residues 985 to 996 (PRARGEKAEKPA) are compositionally biased toward basic and acidic residues.

It belongs to the ABC transporter superfamily. UvrA family. In terms of assembly, forms a heterotetramer with UvrB during the search for lesions.

The protein localises to the cytoplasm. Functionally, the UvrABC repair system catalyzes the recognition and processing of DNA lesions. UvrA is an ATPase and a DNA-binding protein. A damage recognition complex composed of 2 UvrA and 2 UvrB subunits scans DNA for abnormalities. When the presence of a lesion has been verified by UvrB, the UvrA molecules dissociate. The protein is UvrABC system protein A of Deinococcus radiodurans (strain ATCC 13939 / DSM 20539 / JCM 16871 / CCUG 27074 / LMG 4051 / NBRC 15346 / NCIMB 9279 / VKM B-1422 / R1).